We begin with the raw amino-acid sequence, 473 residues long: Ribosomal RNA small subunit methyltransferase F (473 aa).

S-adenosyl-L-methionine is bound by residues 124–130 (ASAPGSK), E148, D175, and D193. The active-site Nucleophile is C246.

Belongs to the class I-like SAM-binding methyltransferase superfamily. RsmB/NOP family.

It localises to the cytoplasm. It catalyses the reaction cytidine(1407) in 16S rRNA + S-adenosyl-L-methionine = 5-methylcytidine(1407) in 16S rRNA + S-adenosyl-L-homocysteine + H(+). Functionally, specifically methylates the cytosine at position 1407 (m5C1407) of 16S rRNA. This Aliivibrio fischeri (strain ATCC 700601 / ES114) (Vibrio fischeri) protein is Ribosomal RNA small subunit methyltransferase F.